The sequence spans 364 residues: Methylthioribose-1-phosphate isomerase (364 aa).

Residues Arg51 to Ala53, Arg88, and Gln199 contribute to the substrate site. Asp240 serves as the catalytic Proton donor. Residue Asn250–Lys251 participates in substrate binding.

It belongs to the eIF-2B alpha/beta/delta subunits family. MtnA subfamily.

It carries out the reaction 5-(methylsulfanyl)-alpha-D-ribose 1-phosphate = 5-(methylsulfanyl)-D-ribulose 1-phosphate. It functions in the pathway amino-acid biosynthesis; L-methionine biosynthesis via salvage pathway; L-methionine from S-methyl-5-thio-alpha-D-ribose 1-phosphate: step 1/6. Functionally, catalyzes the interconversion of methylthioribose-1-phosphate (MTR-1-P) into methylthioribulose-1-phosphate (MTRu-1-P). This is Methylthioribose-1-phosphate isomerase from Cereibacter sphaeroides (strain KD131 / KCTC 12085) (Rhodobacter sphaeroides).